A 442-amino-acid polypeptide reads, in one-letter code: Alpha-1,6-mannosyl-glycoprotein 2-beta-N-acetylglucosaminyltransferase (442 aa).

Over methionine 1–lysine 9 the chain is Cytoplasmic. A helical; Signal-anchor for type II membrane protein transmembrane segment spans residues valine 10–glycine 29. The Lumenal portion of the chain corresponds to arginine 30 to glutamine 442. N-linked (GlcNAc...) asparagine glycans are attached at residues asparagine 64 and asparagine 81. Residues glutamine 118–arginine 122 and aspartate 149 each bind substrate. A disulfide bridge links cysteine 191 with cysteine 205. A substrate-binding site is contributed by glutamine 224–histidine 228. Aspartate 256 contributes to the Mn(2+) binding site. Cysteine 278 and cysteine 281 form a disulfide bridge. Arginine 293 provides a ligand contact to substrate. Cystine bridges form between cysteine 329-cysteine 352, cysteine 334-cysteine 435, and cysteine 373-cysteine 381. Histidine 369 is a binding site for Mn(2+).

This sequence belongs to the glycosyltransferase 16 (GT16) protein family. As to quaternary structure, homodimer. Mn(2+) serves as cofactor. As to expression, detected in liver (at protein level). Detected in liver, brain, thymus and spleen.

Its subcellular location is the golgi apparatus membrane. It carries out the reaction an N(4)-{beta-D-GlcNAc-(1-&gt;2)-alpha-D-Man-(1-&gt;3)-[alpha-D-Man-(1-&gt;6)]-beta-D-Man-(1-&gt;4)-beta-D-GlcNAc-(1-&gt;4)-beta-D-GlcNAc}-L-asparaginyl-[protein] + UDP-N-acetyl-alpha-D-glucosamine = N(4)-{beta-D-GlcNAc-(1-&gt;2)-alpha-D-Man-(1-&gt;3)-[beta-D-GlcNAc-(1-&gt;2)-alpha-D-Man-(1-&gt;6)]-beta-D-Man-(1-&gt;4)-beta-D-GlcNAc-(1-&gt;4)-beta-D-GlcNAc}-L-asparaginyl-[protein] + UDP + H(+). The protein operates within protein modification; protein glycosylation. Plays an essential role in protein N-glycosylation. Catalyzes the transfer of N-acetylglucosamine (GlcNAc) onto the free terminal mannose moiety in the core structure of the nascent N-linked glycan chain, giving rise to the second branch in complex glycans. The protein is Alpha-1,6-mannosyl-glycoprotein 2-beta-N-acetylglucosaminyltransferase (Mgat2) of Rattus norvegicus (Rat).